The following is a 511-amino-acid chain: Histidine ammonia-lyase (511 aa).

The segment at residues alanine 144–glycine 146 is a cross-link (5-imidazolinone (Ala-Gly)). A 2,3-didehydroalanine (Ser) modification is found at serine 145.

The protein belongs to the PAL/histidase family. Post-translationally, contains an active site 4-methylidene-imidazol-5-one (MIO), which is formed autocatalytically by cyclization and dehydration of residues Ala-Ser-Gly.

It is found in the cytoplasm. It carries out the reaction L-histidine = trans-urocanate + NH4(+). Its pathway is amino-acid degradation; L-histidine degradation into L-glutamate; N-formimidoyl-L-glutamate from L-histidine: step 1/3. In Halalkalibacterium halodurans (strain ATCC BAA-125 / DSM 18197 / FERM 7344 / JCM 9153 / C-125) (Bacillus halodurans), this protein is Histidine ammonia-lyase.